The following is a 195-amino-acid chain: dITP/XTP pyrophosphatase (195 aa).

8 to 13 provides a ligand contact to substrate; sequence SNNQGK. Mg(2+) is bound by residues E39 and D68. The active-site Proton acceptor is D68. Residues S69, 149–152, K172, and 177–178 each bind substrate; these read FGYD and HR.

Belongs to the HAM1 NTPase family. In terms of assembly, homodimer. Mg(2+) is required as a cofactor.

The enzyme catalyses XTP + H2O = XMP + diphosphate + H(+). The catalysed reaction is dITP + H2O = dIMP + diphosphate + H(+). It carries out the reaction ITP + H2O = IMP + diphosphate + H(+). Functionally, pyrophosphatase that catalyzes the hydrolysis of nucleoside triphosphates to their monophosphate derivatives, with a high preference for the non-canonical purine nucleotides XTP (xanthosine triphosphate), dITP (deoxyinosine triphosphate) and ITP. Seems to function as a house-cleaning enzyme that removes non-canonical purine nucleotides from the nucleotide pool, thus preventing their incorporation into DNA/RNA and avoiding chromosomal lesions. This chain is dITP/XTP pyrophosphatase, found in Staphylococcus aureus (strain MRSA252).